The chain runs to 460 residues: A-type ATP synthase subunit B (460 aa).

This sequence belongs to the ATPase alpha/beta chains family. As to quaternary structure, has multiple subunits with at least A(3), B(3), C, D, E, F, H, I and proteolipid K(x).

It localises to the cell membrane. In terms of biological role, component of the A-type ATP synthase that produces ATP from ADP in the presence of a proton gradient across the membrane. The B chain is a regulatory subunit. The sequence is that of A-type ATP synthase subunit B from Thermoplasma volcanium (strain ATCC 51530 / DSM 4299 / JCM 9571 / NBRC 15438 / GSS1).